The primary structure comprises 101 residues: MIPGELLPQDGDLELNAGRPTVTVTVANTGDRPVQIGSHYHFYEVNDALRFDREAARGFRLNIAAGTAVRFEPGQERTVELVALAGDRVVYGFAGRVMGKL.

The protein belongs to the urease beta subunit family. In terms of assembly, heterotrimer of UreA (gamma), UreB (beta) and UreC (alpha) subunits. Three heterotrimers associate to form the active enzyme.

Its subcellular location is the cytoplasm. The enzyme catalyses urea + 2 H2O + H(+) = hydrogencarbonate + 2 NH4(+). Its pathway is nitrogen metabolism; urea degradation; CO(2) and NH(3) from urea (urease route): step 1/1. The sequence is that of Urease subunit beta from Ralstonia pickettii (strain 12J).